We begin with the raw amino-acid sequence, 1279 residues long: ATP-dependent helicase/nuclease subunit A (1279 aa).

The UvrD-like helicase ATP-binding domain occupies 4 to 499 (TKWTDEQRQA…VKLFKNFRSR (496 aa)). ATP is bound at residue 25–32 (AGAGAGKT). The UvrD-like helicase C-terminal domain maps to 526–853 (EEALKVGASY…RIMSIHKSKG (328 aa)).

This sequence belongs to the helicase family. AddA subfamily. Heterodimer of AddA and AddB/RexB. It depends on Mg(2+) as a cofactor.

The enzyme catalyses Couples ATP hydrolysis with the unwinding of duplex DNA by translocating in the 3'-5' direction.. It catalyses the reaction ATP + H2O = ADP + phosphate + H(+). In terms of biological role, the heterodimer acts as both an ATP-dependent DNA helicase and an ATP-dependent, dual-direction single-stranded exonuclease. Recognizes the chi site generating a DNA molecule suitable for the initiation of homologous recombination. The AddA nuclease domain is required for chi fragment generation; this subunit has the helicase and 3' -&gt; 5' nuclease activities. In Clostridium botulinum (strain 657 / Type Ba4), this protein is ATP-dependent helicase/nuclease subunit A.